The following is a 91-amino-acid chain: Small ribosomal subunit protein uS19 (91 aa).

It belongs to the universal ribosomal protein uS19 family.

In terms of biological role, protein S19 forms a complex with S13 that binds strongly to the 16S ribosomal RNA. This Verminephrobacter eiseniae (strain EF01-2) protein is Small ribosomal subunit protein uS19.